Here is a 135-residue protein sequence, read N- to C-terminus: Protein E6 (135 aa).

Zinc fingers lie at residues 11-47 (CIWCKKGLDKVDAKRCHEKKIRIACRNGKHCAVCTSC) and 83-119 (CMYCGGCLTRDEKERHRLFCEDFWIFRHQVRGRCYLC).

The protein belongs to the papillomaviridae E6 protein family. Forms homodimers. Interacts with ubiquitin-protein ligase UBE3A/E6-AP; this interaction stimulates UBE3A ubiquitin activity. Interacts with host BAK1.

It is found in the host cytoplasm. The protein localises to the host nucleus. Plays a major role in the induction and maintenance of cellular transformation. E6 associates with host UBE3A/E6-AP ubiquitin-protein ligase and modulates its activity. Protects host keratinocytes from apoptosis by mediating the degradation of host BAK1. May also inhibit host immune response. The chain is Protein E6 from Cervus elaphus (Red deer).